A 222-amino-acid polypeptide reads, in one-letter code: Cytochrome b6 (222 aa).

A helical transmembrane segment spans residues 39-59; the sequence is IFYCLGGITLVCFLIQFATGF. C42 lines the heme c pocket. Residues H93 and H107 each coordinate heme b. 3 helical membrane-spanning segments follow: residues 97 to 117, 123 to 143, and 193 to 213; these read ASMMVLMMILHTFRVYLTGGF, LTWVTGVVMAVITVSFGVTGY, and LHTFVLPWFIAVFMLLHFLMI. Heme b is bound by residues H194 and H209.

It belongs to the cytochrome b family. PetB subfamily. In terms of assembly, the 4 large subunits of the cytochrome b6-f complex are cytochrome b6, subunit IV (17 kDa polypeptide, PetD), cytochrome f and the Rieske protein, while the 4 small subunits are PetG, PetL, PetM and PetN. The complex functions as a dimer. It depends on heme b as a cofactor. The cofactor is heme c.

The protein localises to the cellular thylakoid membrane. Component of the cytochrome b6-f complex, which mediates electron transfer between photosystem II (PSII) and photosystem I (PSI), cyclic electron flow around PSI, and state transitions. The polypeptide is Cytochrome b6 (Trichodesmium erythraeum (strain IMS101)).